A 147-amino-acid polypeptide reads, in one-letter code: MLTLTQLVTPNPDVAITLTLFLTAEERCRSRHRFETEDGQVVFLRLPRGTLLQDGDILQDETNGNLIRIAAKPEPVLTAVAQTQLLLMRAAYHLGNRHVPVEITPTYLRLSPDTVLRTMLEHMGLEITAEILPFQPELGAYGHHHPH.

The protein belongs to the UreE family.

It is found in the cytoplasm. Involved in urease metallocenter assembly. Binds nickel. Probably functions as a nickel donor during metallocenter assembly. This is Urease accessory protein UreE from Nostoc sp. (strain PCC 7120 / SAG 25.82 / UTEX 2576).